The chain runs to 953 residues: UvrABC system protein A (953 aa).

Gly33 to Ser40 lines the ATP pocket. ABC transporter domains follow at residues Trp320 to Ile599 and Gly619 to Lys949. Residue Gly652–Ser659 coordinates ATP. A C4-type zinc finger spans residues Cys752–Cys778.

Belongs to the ABC transporter superfamily. UvrA family. As to quaternary structure, forms a heterotetramer with UvrB during the search for lesions.

It is found in the cytoplasm. In terms of biological role, the UvrABC repair system catalyzes the recognition and processing of DNA lesions. UvrA is an ATPase and a DNA-binding protein. A damage recognition complex composed of 2 UvrA and 2 UvrB subunits scans DNA for abnormalities. When the presence of a lesion has been verified by UvrB, the UvrA molecules dissociate. The chain is UvrABC system protein A from Rickettsia typhi (strain ATCC VR-144 / Wilmington).